Consider the following 768-residue polypeptide: DNA ligase (768 aa).

A compositionally biased stretch (low complexity) spans 1–11 (MSPSAPANSAP). The interval 1 to 28 (MSPSAPANSAPDPDRNGVPDVGPASAAP) is disordered. Residues 62–66 (DAEYD), 111–112 (SI), and Glu148 contribute to the NAD(+) site. The active-site N6-AMP-lysine intermediate is Lys150. Residues Arg171, Glu238, Lys361, and Lys385 each coordinate NAD(+). Residues Cys484, Cys487, Cys502, and Cys508 each contribute to the Zn(2+) site. One can recognise a BRCT domain in the interval 670 to 759 (AAELPLAGKT…EADADADAEG (90 aa)).

Belongs to the NAD-dependent DNA ligase family. LigA subfamily. It depends on Mg(2+) as a cofactor. Mn(2+) is required as a cofactor.

The catalysed reaction is NAD(+) + (deoxyribonucleotide)n-3'-hydroxyl + 5'-phospho-(deoxyribonucleotide)m = (deoxyribonucleotide)n+m + AMP + beta-nicotinamide D-nucleotide.. DNA ligase that catalyzes the formation of phosphodiester linkages between 5'-phosphoryl and 3'-hydroxyl groups in double-stranded DNA using NAD as a coenzyme and as the energy source for the reaction. It is essential for DNA replication and repair of damaged DNA. This is DNA ligase from Leptothrix cholodnii (strain ATCC 51168 / LMG 8142 / SP-6) (Leptothrix discophora (strain SP-6)).